Here is a 337-residue protein sequence, read N- to C-terminus: Anthranilate phosphoribosyltransferase (337 aa).

5-phospho-alpha-D-ribose 1-diphosphate-binding positions include glycine 81, 84–85 (GD), serine 89, 91–94 (NVST), 109–117 (KHGNRALSS), and alanine 121. Anthranilate is bound at residue glycine 81. Serine 93 contacts Mg(2+). Anthranilate is bound at residue asparagine 112. Residue arginine 167 coordinates anthranilate. Positions 226 and 227 each coordinate Mg(2+).

Belongs to the anthranilate phosphoribosyltransferase family. As to quaternary structure, homodimer. The cofactor is Mg(2+).

The catalysed reaction is N-(5-phospho-beta-D-ribosyl)anthranilate + diphosphate = 5-phospho-alpha-D-ribose 1-diphosphate + anthranilate. Its pathway is amino-acid biosynthesis; L-tryptophan biosynthesis; L-tryptophan from chorismate: step 2/5. Functionally, catalyzes the transfer of the phosphoribosyl group of 5-phosphorylribose-1-pyrophosphate (PRPP) to anthranilate to yield N-(5'-phosphoribosyl)-anthranilate (PRA). The protein is Anthranilate phosphoribosyltransferase of Nitrobacter hamburgensis (strain DSM 10229 / NCIMB 13809 / X14).